The sequence spans 311 residues: Non-homologous end joining protein Ku (311 aa).

The 185-residue stretch at 26–210 (ISFGLVNIPI…NVNDKELQTA (185 aa)) folds into the Ku domain. Positions 269–311 (ASIDRTRRPNRETPAAAPAQAAEPKGAGDKKQKTTRKKASGTS) are disordered. Residues 282–293 (PAAAPAQAAEPK) are compositionally biased toward low complexity. Residues 301-311 (KTTRKKASGTS) are compositionally biased toward basic residues.

It belongs to the prokaryotic Ku family. As to quaternary structure, homodimer. Interacts with LigD.

Its subcellular location is the spore core. Its function is as follows. With LigD forms a non-homologous end joining (NHEJ) DNA repair enzyme, which repairs dsDNA breaks with reduced fidelity. Binds linear dsDNA with 5'- and 3'- overhangs but not closed circular dsDNA nor ssDNA. Recruits and stimulates the ligase activity of LigD. Probably involved in DNA repair during spore germination. The polypeptide is Non-homologous end joining protein Ku (Bacillus subtilis (strain 168)).